The sequence spans 192 residues: Phosphomevalonate kinase (192 aa).

ATP contacts are provided by residues 17-23 (KRKSGKD) and R141. N170 provides a ligand contact to substrate. ATP-binding residues include H171 and Q180.

In terms of assembly, monomer.

The protein localises to the cytoplasm. It localises to the cytosol. The catalysed reaction is (R)-5-phosphomevalonate + ATP = (R)-5-diphosphomevalonate + ADP. The protein operates within isoprenoid biosynthesis; isopentenyl diphosphate biosynthesis via mevalonate pathway; isopentenyl diphosphate from (R)-mevalonate: step 2/3. Functionally, catalyzes the reversible ATP-dependent phosphorylation of mevalonate 5-phosphate to produce mevalonate diphosphate and ADP, a key step in the mevalonic acid mediated biosynthesis of isopentenyl diphosphate and other polyisoprenoid metabolites. This chain is Phosphomevalonate kinase (PMVK), found in Bos taurus (Bovine).